The primary structure comprises 441 residues: Histidinol dehydrogenase (441 aa).

Substrate contacts are provided by Thr-240, Gln-262, and His-265. Zn(2+)-binding residues include Gln-262 and His-265. Catalysis depends on proton acceptor residues Glu-332 and His-333. 4 residues coordinate substrate: His-333, Asp-366, Glu-420, and His-425. Asp-366 is a binding site for Zn(2+). Residue His-425 coordinates Zn(2+).

It belongs to the histidinol dehydrogenase family. The cofactor is Zn(2+).

The catalysed reaction is L-histidinol + 2 NAD(+) + H2O = L-histidine + 2 NADH + 3 H(+). It functions in the pathway amino-acid biosynthesis; L-histidine biosynthesis; L-histidine from 5-phospho-alpha-D-ribose 1-diphosphate: step 9/9. Its function is as follows. Catalyzes the sequential NAD-dependent oxidations of L-histidinol to L-histidinaldehyde and then to L-histidine. The protein is Histidinol dehydrogenase of Streptomyces avermitilis (strain ATCC 31267 / DSM 46492 / JCM 5070 / NBRC 14893 / NCIMB 12804 / NRRL 8165 / MA-4680).